The chain runs to 293 residues: Bifunctional protein FolD (293 aa).

NADP(+) contacts are provided by residues 164–166 (GRS), serine 193, and threonine 234.

It belongs to the tetrahydrofolate dehydrogenase/cyclohydrolase family. Homodimer.

The enzyme catalyses (6R)-5,10-methylene-5,6,7,8-tetrahydrofolate + NADP(+) = (6R)-5,10-methenyltetrahydrofolate + NADPH. It catalyses the reaction (6R)-5,10-methenyltetrahydrofolate + H2O = (6R)-10-formyltetrahydrofolate + H(+). The protein operates within one-carbon metabolism; tetrahydrofolate interconversion. Catalyzes the oxidation of 5,10-methylenetetrahydrofolate to 5,10-methenyltetrahydrofolate and then the hydrolysis of 5,10-methenyltetrahydrofolate to 10-formyltetrahydrofolate. The chain is Bifunctional protein FolD from Bacteroides fragilis (strain ATCC 25285 / DSM 2151 / CCUG 4856 / JCM 11019 / LMG 10263 / NCTC 9343 / Onslow / VPI 2553 / EN-2).